The chain runs to 412 residues: Peptidase T (412 aa).

H83 lines the Zn(2+) pocket. The active site involves D85. D145 is a binding site for Zn(2+). E179 serves as the catalytic Proton acceptor. 3 residues coordinate Zn(2+): E180, D202, and H384.

Belongs to the peptidase M20B family. Zn(2+) is required as a cofactor.

It localises to the cytoplasm. It carries out the reaction Release of the N-terminal residue from a tripeptide.. In terms of biological role, cleaves the N-terminal amino acid of tripeptides. The sequence is that of Peptidase T from Fusobacterium nucleatum subsp. nucleatum (strain ATCC 25586 / DSM 15643 / BCRC 10681 / CIP 101130 / JCM 8532 / KCTC 2640 / LMG 13131 / VPI 4355).